Reading from the N-terminus, the 154-residue chain is SsrA-binding protein (154 aa).

Belongs to the SmpB family.

The protein resides in the cytoplasm. Functionally, required for rescue of stalled ribosomes mediated by trans-translation. Binds to transfer-messenger RNA (tmRNA), required for stable association of tmRNA with ribosomes. tmRNA and SmpB together mimic tRNA shape, replacing the anticodon stem-loop with SmpB. tmRNA is encoded by the ssrA gene; the 2 termini fold to resemble tRNA(Ala) and it encodes a 'tag peptide', a short internal open reading frame. During trans-translation Ala-aminoacylated tmRNA acts like a tRNA, entering the A-site of stalled ribosomes, displacing the stalled mRNA. The ribosome then switches to translate the ORF on the tmRNA; the nascent peptide is terminated with the 'tag peptide' encoded by the tmRNA and targeted for degradation. The ribosome is freed to recommence translation, which seems to be the essential function of trans-translation. The protein is SsrA-binding protein of Enterococcus faecalis (strain ATCC 700802 / V583).